The chain runs to 147 residues: Small ribosomal subunit protein uS12 (147 aa).

It belongs to the universal ribosomal protein uS12 family. As to quaternary structure, part of the 30S ribosomal subunit.

In terms of biological role, with S4 and S5 plays an important role in translational accuracy. Located at the interface of the 30S and 50S subunits. This Pyrococcus abyssi (strain GE5 / Orsay) protein is Small ribosomal subunit protein uS12.